A 151-amino-acid chain; its full sequence is MLP-like protein 328 (151 aa).

Belongs to the MLP family.

This is MLP-like protein 328 (MLP328) from Arabidopsis thaliana (Mouse-ear cress).